We begin with the raw amino-acid sequence, 112 residues long: Large ribosomal subunit protein uL18 (112 aa).

It belongs to the universal ribosomal protein uL18 family. Part of the 50S ribosomal subunit; part of the 5S rRNA/L5/L18/L25 subcomplex. Contacts the 5S and 23S rRNAs.

Its function is as follows. This is one of the proteins that bind and probably mediate the attachment of the 5S RNA into the large ribosomal subunit, where it forms part of the central protuberance. The polypeptide is Large ribosomal subunit protein uL18 (Deinococcus deserti (strain DSM 17065 / CIP 109153 / LMG 22923 / VCD115)).